A 163-amino-acid chain; its full sequence is Phosphopantetheine adenylyltransferase (163 aa).

Ser9 contributes to the substrate binding site. Residues 9-10 (SF) and His17 each bind ATP. Residues Lys41, Ile75, and Arg89 each contribute to the substrate site. ATP contacts are provided by residues 90–92 (GIR), Glu100, and 125–131 (HLYVRSD).

This sequence belongs to the bacterial CoaD family. As to quaternary structure, homohexamer. Requires Mg(2+) as cofactor.

Its subcellular location is the cytoplasm. The catalysed reaction is (R)-4'-phosphopantetheine + ATP + H(+) = 3'-dephospho-CoA + diphosphate. The protein operates within cofactor biosynthesis; coenzyme A biosynthesis; CoA from (R)-pantothenate: step 4/5. Its function is as follows. Reversibly transfers an adenylyl group from ATP to 4'-phosphopantetheine, yielding dephospho-CoA (dPCoA) and pyrophosphate. In Borrelia garinii subsp. bavariensis (strain ATCC BAA-2496 / DSM 23469 / PBi) (Borreliella bavariensis), this protein is Phosphopantetheine adenylyltransferase.